The following is a 317-amino-acid chain: Integrin-binding sialoprotein (317 aa).

The signal sequence occupies residues 1–16; that stretch reads MKTALILLSILGMACA. Phosphoserine is present on residues S31, S67, S74, S75, S94, and S100. The segment at 58 to 254 is disordered; that stretch reads FPVQGSSDSS…RTTSPPFGKT (197 aa). Positions 66–102 are enriched in acidic residues; sequence SSEENGDDSSEEEEEEEETSNEGENNEESNEDEDSEA. N-linked (GlcNAc...) asparagine glycosylation occurs at N104. O-linked (GalNAc...) threonine glycosylation is found at T119 and T122. Position 149 is a phosphoserine (S149). Residues 149–173 are compositionally biased toward acidic residues; it reads SDEEEEEEEEGNENEESEAEVDENE. N-linked (GlcNAc...) asparagine glycans are attached at residues N177, N182, and N190. The span at 222-232 shows a compositional bias: polar residues; sequence KGTSKTTTSPN. 5 O-linked (GalNAc...) threonine glycosylation sites follow: T227, T228, T229, T238, and T239. Residue S280 is modified to Phosphoserine. Residues 286-288 carry the Integrin-binding motif motif; the sequence is RGD. Sulfotyrosine occurs at positions 313 and 314.

Monomer. Interacts with integrins; the interaction promotes cell adhesion. N-glycosylated; glycans consist of sialylated and core-fucosylated bi-, tri- and tetraantennary chains. Post-translationally, O-glycosylated at eight sites; mucin-type glycans contain Gal, GlcNAc, GalNAc and terminal NeuAc. In terms of tissue distribution, expressed in bone (at protein level). Expressed in trophoblast cells of placenta (at protein level). Expressed in brain.

Its subcellular location is the secreted. In terms of biological role, binds tightly to hydroxyapatite. Appears to form an integral part of the mineralized matrix. Probably important to cell-matrix interaction. Promotes adhesion and migration of various cells via the alpha-V/beta-3 integrin receptor (ITGAV:ITGB3). This Homo sapiens (Human) protein is Integrin-binding sialoprotein (IBSP).